A 197-amino-acid chain; its full sequence is Ribonuclease HII (197 aa).

Residues His-11–Leu-197 enclose the RNase H type-2 domain. Positions 17, 18, and 109 each coordinate a divalent metal cation.

The protein belongs to the RNase HII family. Requires Mn(2+) as cofactor. It depends on Mg(2+) as a cofactor.

The protein resides in the cytoplasm. It catalyses the reaction Endonucleolytic cleavage to 5'-phosphomonoester.. Functionally, endonuclease that specifically degrades the RNA of RNA-DNA hybrids. This chain is Ribonuclease HII, found in Actinobacillus pleuropneumoniae serotype 5b (strain L20).